The following is a 217-amino-acid chain: MAKFETIAAEDRARAGKGVARATRRAGKVPAVIYGAKQEPTLIALDPRIVLREMKRGGWRSRLYEIETASGKARALMRDIQLHPVTDQPEHVDFQRLAAGEPVRVAVNVNFLNELISVGMKRGGVLNVVRHAVEVLCDPDHIPDHFEADLGPLDINDNIRWSDLKGTGEAKPTITDRDFVIATIAPPTVVAEAAPAEGAAAAPAKGAAKGAAKGGKK.

Residues 195-211 are compositionally biased toward low complexity; the sequence is PAEGAAAAPAKGAAKGA. The segment at 195–217 is disordered; the sequence is PAEGAAAAPAKGAAKGAAKGGKK.

Belongs to the bacterial ribosomal protein bL25 family. CTC subfamily. In terms of assembly, part of the 50S ribosomal subunit; part of the 5S rRNA/L5/L18/L25 subcomplex. Contacts the 5S rRNA. Binds to the 5S rRNA independently of L5 and L18.

This is one of the proteins that binds to the 5S RNA in the ribosome where it forms part of the central protuberance. This Acidiphilium cryptum (strain JF-5) protein is Large ribosomal subunit protein bL25.